We begin with the raw amino-acid sequence, 145 residues long: Cytochrome b (145 aa).

The helical transmembrane segment at 38-58 (FFALHFLLPFVLAALALMHLI) threads the bilayer. Residues H42 and H56 each coordinate heme b. Residue H61 coordinates a ubiquinone. Residues 85–105 (FIFKDLVTIFIFFIVLSIFVF) traverse the membrane as a helical segment.

The protein belongs to the cytochrome b family. As to quaternary structure, fungal cytochrome b-c1 complex contains 10 subunits; 3 respiratory subunits, 2 core proteins and 5 low-molecular weight proteins. Cytochrome b-c1 complex is a homodimer. It depends on heme b as a cofactor.

The protein localises to the mitochondrion inner membrane. Its function is as follows. Component of the ubiquinol-cytochrome c reductase complex (complex III or cytochrome b-c1 complex) that is part of the mitochondrial respiratory chain. The b-c1 complex mediates electron transfer from ubiquinol to cytochrome c. Contributes to the generation of a proton gradient across the mitochondrial membrane that is then used for ATP synthesis. This is Cytochrome b (cob) from Aspergillus flavus.